The following is an 84-amino-acid chain: Cell division topological specificity factor (84 aa).

This sequence belongs to the MinE family.

Its function is as follows. Prevents the cell division inhibition by proteins MinC and MinD at internal division sites while permitting inhibition at polar sites. This ensures cell division at the proper site by restricting the formation of a division septum at the midpoint of the long axis of the cell. The protein is Cell division topological specificity factor of Pseudomonas putida (strain ATCC 700007 / DSM 6899 / JCM 31910 / BCRC 17059 / LMG 24140 / F1).